Here is a 158-residue protein sequence, read N- to C-terminus: Protein-export protein SecB (158 aa).

Belongs to the SecB family. In terms of assembly, homotetramer, a dimer of dimers. One homotetramer interacts with 1 SecA dimer.

It localises to the cytoplasm. Functionally, one of the proteins required for the normal export of preproteins out of the cell cytoplasm. It is a molecular chaperone that binds to a subset of precursor proteins, maintaining them in a translocation-competent state. It also specifically binds to its receptor SecA. This Yersinia pestis (strain Pestoides F) protein is Protein-export protein SecB.